A 1076-amino-acid chain; its full sequence is Carbamoyl phosphate synthase large chain (1076 aa).

Positions 1–403 are carboxyphosphate synthetic domain; that stretch reads MPKRTDIQSI…SLQKALRGLE (403 aa). Residues Arg-129, Arg-169, Gly-175, Gly-176, Glu-208, Leu-210, Glu-215, Gly-241, Ile-242, His-243, Gln-285, and Glu-299 each coordinate ATP. An ATP-grasp 1 domain is found at 133 to 328; the sequence is DKAMKSIGLE…IAKVAAKLAV (196 aa). Gln-285, Glu-299, and Asn-301 together coordinate Mg(2+). Positions 285, 299, and 301 each coordinate Mn(2+). Residues 404–553 are oligomerization domain; the sequence is VGAAGLDEKV…YSTYDEECEA (150 aa). The segment at 554–935 is carbamoyl phosphate synthetic domain; that stretch reads NPTDKDKIMV…AYAKAELGCG (382 aa). In terms of domain architecture, ATP-grasp 2 spans 678 to 869; it reads QQAVQRLGLK…LAKIAARVMV (192 aa). The ATP site is built by Arg-714, Arg-753, Leu-755, Glu-760, Gly-785, Val-786, His-787, Ser-788, Gln-828, and Glu-840. Mg(2+) contacts are provided by Gln-828, Glu-840, and Asn-842. The Mn(2+) site is built by Gln-828, Glu-840, and Asn-842. The region spanning 936 to 1076 is the MGS-like domain; it reads SVYPEGGRAL…LHARVKANQA (141 aa). The tract at residues 936–1076 is allosteric domain; the sequence is SVYPEGGRAL…LHARVKANQA (141 aa).

Belongs to the CarB family. Composed of two chains; the small (or glutamine) chain promotes the hydrolysis of glutamine to ammonia, which is used by the large (or ammonia) chain to synthesize carbamoyl phosphate. Tetramer of heterodimers (alpha,beta)4. It depends on Mg(2+) as a cofactor. Mn(2+) is required as a cofactor.

It catalyses the reaction hydrogencarbonate + L-glutamine + 2 ATP + H2O = carbamoyl phosphate + L-glutamate + 2 ADP + phosphate + 2 H(+). It carries out the reaction hydrogencarbonate + NH4(+) + 2 ATP = carbamoyl phosphate + 2 ADP + phosphate + 2 H(+). Its pathway is amino-acid biosynthesis; L-arginine biosynthesis; carbamoyl phosphate from bicarbonate: step 1/1. The protein operates within pyrimidine metabolism; UMP biosynthesis via de novo pathway; (S)-dihydroorotate from bicarbonate: step 1/3. In terms of biological role, large subunit of the glutamine-dependent carbamoyl phosphate synthetase (CPSase). CPSase catalyzes the formation of carbamoyl phosphate from the ammonia moiety of glutamine, carbonate, and phosphate donated by ATP, constituting the first step of 2 biosynthetic pathways, one leading to arginine and/or urea and the other to pyrimidine nucleotides. The large subunit (synthetase) binds the substrates ammonia (free or transferred from glutamine from the small subunit), hydrogencarbonate and ATP and carries out an ATP-coupled ligase reaction, activating hydrogencarbonate by forming carboxy phosphate which reacts with ammonia to form carbamoyl phosphate. In Vibrio cholerae serotype O1 (strain ATCC 39315 / El Tor Inaba N16961), this protein is Carbamoyl phosphate synthase large chain.